The following is a 224-amino-acid chain: Protein HLJ1 (224 aa).

One can recognise a J domain in the interval 18-87 (DKHEFYEILK…RSIYDRIGRD (70 aa)). A compositionally biased stretch (basic and acidic residues) spans 84 to 93 (IGRDPDDRQM). The interval 84–107 (IGRDPDDRQMPSRGAASGFRGSAG) is disordered. Phosphoserine is present on Ser109. Residues 173–192 (NRGGSPFMRQQPRSRQQQQQ) form a disordered region. Residues 181–192 (RQQPRSRQQQQQ) are compositionally biased toward low complexity.

In Saccharomyces cerevisiae (strain ATCC 204508 / S288c) (Baker's yeast), this protein is Protein HLJ1 (HLJ1).